Here is a 555-residue protein sequence, read N- to C-terminus: Efflux pump FUS6 (555 aa).

Positions 1 to 23 (MASAKDAQPAPEKSLSSDPQPEP) are disordered. The next 5 membrane-spanning stretches (helical) occupy residues 31-51 (WLIFVAISLTTFLAALDTSII), 67-87 (LYVWIIDAYLLASTATIPIFA), 97-117 (SLTLIAVCIFTLGSGLCGGAH), 130-150 (GIGGGGILTMSEIVVCDMVSI), and 159-179 (IIGGVWAIAAVVAPVMGGAFA). A glycan (N-linked (GlcNAc...) asparagine) is linked at Asn-181. Helical transmembrane passes span 186-206 (WIFYINLPIAGVSLVALGLFL), 225-245 (WGGSVLLIGSVTSIVLALSWG), and 253-273 (GWQTIVPLVIGLLALVAFFAY). The N-linked (GlcNAc...) asparagine glycan is linked to Asn-291. 6 helical membrane-spanning segments follow: residues 297–317 (LLVISFIHSLLLYWICYFLPV), 332–352 (VMLFPIACTSAPAGVAAGITI), 360–380 (VWHFTGFVLMSIACGLFTLLD), 393–413 (ILFGVGTGTVFTSTLPPILAS), 425–445 (AWTFIRNFGSIWGVAIPAAVF), and 501–521 (KVVWQVSLAFCLLGFILCFFV). Residue Asn-545 is glycosylated (N-linked (GlcNAc...) asparagine).

The protein belongs to the major facilitator superfamily. TCR/Tet family.

Its subcellular location is the membrane. Efflux pump; part of the gene cluster that mediates the biosynthesis of the mycotoxin fusarin C. Within the cluster, FUS1, FUS2, FUS8 and FUS9 are sufficient for fusarin production. The other FUS cluster members are not essential for fusarin C biosynthesis. The protein is Efflux pump FUS6 of Gibberella fujikuroi (strain CBS 195.34 / IMI 58289 / NRRL A-6831) (Bakanae and foot rot disease fungus).